The primary structure comprises 522 residues: Peptide methionine sulfoxide reductase MsrA/MsrB (522 aa).

Residues 17 to 174 (LALGACSPKI…ALALIRDPNA (158 aa)) form the Thioredoxin domain. A disulfide bond links Cys-68 and Cys-71. The peptide methionine sulfoxide reductase A stretch occupies residues 199-354 (RTIYLAGGCF…PNGYCHIDIR (156 aa)). Cys-207 is an active-site residue. A MsrB domain is found at 383 to 506 (DAELKRTLTE…NGASLKFIPL (124 aa)). A disulfide bond links Cys-440 and Cys-495. Residue Cys-495 is the Nucleophile of the active site.

In the N-terminal section; belongs to the thioredoxin family. The protein in the central section; belongs to the MsrA Met sulfoxide reductase family. This sequence in the C-terminal section; belongs to the MsrB Met sulfoxide reductase family.

The enzyme catalyses L-methionyl-[protein] + [thioredoxin]-disulfide + H2O = L-methionyl-(S)-S-oxide-[protein] + [thioredoxin]-dithiol. The catalysed reaction is [thioredoxin]-disulfide + L-methionine + H2O = L-methionine (S)-S-oxide + [thioredoxin]-dithiol. It catalyses the reaction L-methionyl-[protein] + [thioredoxin]-disulfide + H2O = L-methionyl-(R)-S-oxide-[protein] + [thioredoxin]-dithiol. Its function is as follows. Has an important function as a repair enzyme for proteins that have been inactivated by oxidation. Catalyzes the reversible oxidation-reduction of methionine sulfoxide in proteins to methionine. The sequence is that of Peptide methionine sulfoxide reductase MsrA/MsrB (msrAB) from Neisseria meningitidis serogroup A / serotype 4A (strain DSM 15465 / Z2491).